The sequence spans 108 residues: UPF0145 protein gll1048 (108 aa).

It belongs to the UPF0145 family.

The protein is UPF0145 protein gll1048 of Gloeobacter violaceus (strain ATCC 29082 / PCC 7421).